Consider the following 62-residue polypeptide: Potassium channel toxin alpha-KTx Tx790 (62 aa).

A signal peptide spans 1–18 (MQKLFIVLVLFCILRLDA). 3 disulfides stabilise this stretch: Cys28-Cys46, Cys33-Cys59, and Cys37-Cys61.

The protein belongs to the short scorpion toxin superfamily. Potassium channel inhibitor family. Alpha-KTx 23 subfamily. As to expression, expressed by the venom gland.

The protein localises to the secreted. May block potassium channels. The sequence is that of Potassium channel toxin alpha-KTx Tx790 from Buthus israelis (Israeli scorpion).